A 242-amino-acid chain; its full sequence is Protein fmp-52, mitochondrial (242 aa).

Residues 1-87 (MSTSTPTSTA…VISSLGTTRV (87 aa)) constitute a mitochondrion transit peptide. The disordered stretch occupies residues 33–58 (SSQVQTISRRAPANPTNSSRLSPTVN). A compositionally biased stretch (polar residues) spans 35 to 58 (QVQTISRRAPANPTNSSRLSPTVN).

The protein belongs to the FMP52 family.

It is found in the mitochondrion outer membrane. The protein is Protein fmp-52, mitochondrial (fmp-52) of Neurospora crassa (strain ATCC 24698 / 74-OR23-1A / CBS 708.71 / DSM 1257 / FGSC 987).